A 262-amino-acid chain; its full sequence is Nitrate transport protein NasD (262 aa).

The region spanning 5–239 is the ABC transporter domain; the sequence is IQVQGVSQRF…RPRNRVQLAD (235 aa). Residue 41-48 coordinates ATP; sequence GHSGCGKS.

This sequence belongs to the ABC transporter superfamily.

The protein resides in the cell membrane. Its function is as follows. Probably part of a high-affinity binding-protein-dependent transport system for nitrate. Probably responsible for energy coupling to the transport system. The protein is Nitrate transport protein NasD (nasD) of Klebsiella oxytoca.